Here is a 316-residue protein sequence, read N- to C-terminus: Protein YIPF2 (316 aa).

Ala-2 is modified (N-acetylalanine). Residues 2 to 124 are Cytoplasmic-facing; sequence ASADELTFHE…LRNRPDLYGP (123 aa). The interval 16–37 is disordered; sequence TNLLADTPDAATTSRSDQLTPQ. The span at 25 to 36 shows a compositional bias: polar residues; that stretch reads AATTSRSDQLTP. A helical transmembrane segment spans residues 125 to 145; sequence FWICATLAFVLAVTGNLTLVL. The Lumenal segment spans residues 146-163; the sequence is AQRRDPSIHYSPQFHKVT. The chain crosses the membrane as a helical span at residues 164 to 184; it reads VAGISIYCYAWLVPLALWGFL. Residues 185 to 196 are Cytoplasmic-facing; it reads RWRKGVQERMGP. The chain crosses the membrane as a helical span at residues 197–219; sequence YTFLETVCIYGYSLFVFIPMVVL. Over 220-231 the chain is Lumenal; it reads WLIPVPWLQWLF. Residues 232-252 form a helical membrane-spanning segment; that stretch reads GALALGLSAAGLVFTLWPVVR. Residues 253–256 lie on the Cytoplasmic side of the membrane; the sequence is EDTR. The chain crosses the membrane as a helical span at residues 257 to 277; that stretch reads LVATVLLSVVVLLHALLAMGC. Over 278 to 316 the chain is Lumenal; the sequence is KLYFFQSLPPENVAPPPQITSLPSNIALSPTLPQSLAPS.

Belongs to the YIP1 family. In terms of assembly, interacts with YIPF6; this interaction may stabilize YIPF2. May also form a ternary complex with YIPF1 and YIPF6.

It localises to the golgi apparatus. It is found in the cis-Golgi network membrane. The protein localises to the trans-Golgi network membrane. Its subcellular location is the late endosome membrane. The polypeptide is Protein YIPF2 (YIPF2) (Homo sapiens (Human)).